The sequence spans 492 residues: UDP-N-acetylmuramoyl-L-alanyl-D-glutamate--2,6-diaminopimelate ligase (492 aa).

Ser-21 serves as a coordination point for UDP-N-acetyl-alpha-D-muramoyl-L-alanyl-D-glutamate. An ATP-binding site is contributed by 98 to 104; that stretch reads GTNGKSS. Residues 144-145, Ser-171, Gln-177, and Arg-179 contribute to the UDP-N-acetyl-alpha-D-muramoyl-L-alanyl-D-glutamate site; that span reads TT. At Lys-211 the chain carries N6-carboxylysine. Meso-2,6-diaminopimelate is bound by residues Arg-372, 396–399, Gly-446, and Glu-450; that span reads DNPR. Positions 396–399 match the Meso-diaminopimelate recognition motif motif; it reads DNPR.

The protein belongs to the MurCDEF family. MurE subfamily. Mg(2+) serves as cofactor. In terms of processing, carboxylation is probably crucial for Mg(2+) binding and, consequently, for the gamma-phosphate positioning of ATP.

Its subcellular location is the cytoplasm. The catalysed reaction is UDP-N-acetyl-alpha-D-muramoyl-L-alanyl-D-glutamate + meso-2,6-diaminopimelate + ATP = UDP-N-acetyl-alpha-D-muramoyl-L-alanyl-gamma-D-glutamyl-meso-2,6-diaminopimelate + ADP + phosphate + H(+). It functions in the pathway cell wall biogenesis; peptidoglycan biosynthesis. In terms of biological role, catalyzes the addition of meso-diaminopimelic acid to the nucleotide precursor UDP-N-acetylmuramoyl-L-alanyl-D-glutamate (UMAG) in the biosynthesis of bacterial cell-wall peptidoglycan. The chain is UDP-N-acetylmuramoyl-L-alanyl-D-glutamate--2,6-diaminopimelate ligase from Rickettsia typhi (strain ATCC VR-144 / Wilmington).